The chain runs to 498 residues: Myocyte-specific enhancer factor 2A (498 aa).

The region spanning 3–57 (RKKIQITRIMDERNRQVTFTKRKFGLMKKAYELSVLCDCEIALIIFNSSNKLFQY) is the MADS-box domain. Residues 58–86 (ASTDMDKVLLKYTEYNEPHESRTNSDIVE) constitute a DNA-binding region (mef2-type). Ser-59 is modified (phosphoserine; by CK2). Phosphoserine is present on residues Ser-98 and Ser-108. Position 108 is a phosphothreonine (Ser-108). The segment at 172-220 (LADSSMLSPPPATLHRNVSPGAPQRPPSTGSASGMLSTTDLTVPNGAGN) is disordered. The span at 198-220 (PSTGSASGMLSTTDLTVPNGAGN) shows a compositional bias: polar residues. The residue at position 233 (Ser-233) is a Phosphoserine. Residues 240–268 (TGANSLGKVMPTKSPPPPGGGSLGMNSRK) form a disordered region. Lys-247 carries the post-translational modification N6-acetyllysine. The residue at position 253 (Ser-253) is a Phosphoserine. The interval 264 to 281 (MNSRKPDLRVVIPPSSKG) is required for interaction with MAPKs. A beta domain region spans residues 287–294 (SEEEELEL). A phosphothreonine; by MAPK7 mark is found at Thr-310 and Thr-317. Phosphothreonine; by NLK is present on Thr-310. The residue at position 353 (Ser-353) is a Phosphoserine; by MAPK7. A compositionally biased stretch (polar residues) spans 388–400 (SNLSINTNQNINI). The disordered stretch occupies residues 388-498 (SNLSINTNQN…KRMRMDTWVT (111 aa)). Lys-401 bears the N6-acetyllysine; alternate mark. Lys-401 is covalently cross-linked (Glycyl lysine isopeptide (Lys-Gly) (interchain with G-Cter in SUMO); alternate). Ser-406 carries the phosphoserine modification. Thr-413 is modified (phosphothreonine). The span at 426 to 436 (QQPPPQPPQPQ) shows a compositional bias: pro residues. Ser-444 is modified (phosphoserine). Low complexity predominate over residues 444-457 (SPVDSLSSSSSSYD). Basic and acidic residues-rich tracts occupy residues 458-468 (GSDREDPRGDF) and 479-498 (NTED…TWVT).

The protein belongs to the MEF2 family. In terms of assembly, binds DNA as a homo- or heterodimer. Dimerizes with MEF2D. Interacts with HDAC7. Interacts with PIAS1; the interaction enhances sumoylation. Interacts with HDAC4, HDAC9 and SLC2A4RG. Interacts (via the N-terminal) with MAPK7; the interaction results in the phosphorylation and transcriptional activity of MEF2A. Constitutive phosphorylation on Ser-406 promotes Lys-401 sumoylation thus preventing acetylation at this site. Dephosphorylation on Ser-406 by PPP3CA upon neuron depolarization promotes a switch from sumoylation to acetylation on residue Lys-403 leading to inhibition of dendrite claw differentiation. Phosphorylation on Thr-312 and Thr-319 are the main sites involved in p38 MAPK signaling and activate transcription. Phosphorylated on these sites by MAPK14/p38alpha and MAPK11/p38beta, but not by MAPK13/p38delta nor by MAPK12/p38gamma. Phosphorylation on Ser-408 by CDK5 induced by neurotoxicity inhibits MEF2A transcriptional activation leading to apoptosis of cortical neurons. Phosphorylation on Thr-312, Thr-319 and Ser-355 can be induced by EGF. Isoform 3 is phosphorylated on Ser-98 and Thr-108. Post-translationally, sumoylation on Lys-401 is enhanced by PIAS1 and represses transcriptional activity. Phosphorylation on Ser-406 is required for sumoylation. Has no effect on nuclear location nor on DNA binding. Sumoylated with SUMO1 and, to a lesser extent with SUMO2 and SUMO3. PIASx facilitates sumoylation in postsynaptic dendrites in the cerebellar cortex and promotes their morphogenesis. In terms of processing, acetylation on Lys-401 activates transcriptional activity. Acetylated by p300 on several sites in diffentiating myocytes. Acetylation on Lys-4 increases DNA binding and transactivation. Hyperacetylation by p300 leads to enhanced cardiac myocyte growth and heart failure. Proteolytically cleaved in cerebellar granule neurons on several sites by caspase 3 and caspase 7 following neurotoxicity. Preferentially cleaves the CDK5-mediated hyperphosphorylated form which leads to neuron apoptosis and transcriptional inactivation. Widely expressed though mainly restricted to skeletal and cardiac muscle, brain, neurons and lymphocytes. Differentially expressed depending on if isoforms contain the beta domain or not, with the total expression of the beta domain-lacking isoforms vastly exceeding that of the beta domain-containing isoforms. Isoforms containing the beta domain are expressed primarily in skeletal and cardiac muscle and in brain. Also present in lung and testis. Splicing to include the beta domain is induced in differentiating myocytes. Isoforms lacking the beta domain are expressed less abundantly in skeletal muscle, brain and lymphocytes, and are uniquely found in ovary, liver, spleen and kidney. In embryos, the beta domain-containing and beta domain-lacking isoforms are equally expressed. Also expressed cerebellar granule neurons and other regions of the CNS. Highest levels in the olfactory bulb, cortex, hippocampus, thalamus and cerebellum.

It is found in the nucleus. Transcriptional activator which binds specifically to the MEF2 element, 5'-YTA[AT](4)TAR-3', found in numerous muscle-specific genes. Also involved in the activation of numerous growth factor- and stress-induced genes. Mediates cellular functions not only in skeletal and cardiac muscle development, but also in neuronal differentiation and survival. Plays diverse roles in the control of cell growth, survival and apoptosis via p38 MAPK signaling in muscle-specific and/or growth factor-related transcription. In cerebellar granule neurons, phosphorylated and sumoylated MEF2A represses transcription of NUR77 promoting synaptic differentiation. Associates with chromatin to the ZNF16 promoter. The protein is Myocyte-specific enhancer factor 2A (Mef2a) of Mus musculus (Mouse).